The primary structure comprises 362 residues: uncharacterized protein (362 aa).

N-acetylalanine is present on A2.

This sequence belongs to the Gfo/Idh/MocA family. In terms of assembly, homodimer.

This is an uncharacterized protein from Arabidopsis thaliana (Mouse-ear cress).